The sequence spans 1150 residues: PAN2-PAN3 deadenylation complex catalytic subunit pan2 (1150 aa).

2 WD repeats span residues 96-139 and 270-309; these read AHEE…DKLH and ANVSFMLGIDLSPSGEALAINDAECAIHLWGSPAKVHFNE. A linker region spans residues 310 to 446; sequence MSKEAEFGDV…GAKINGETDD (137 aa). The 370-residue stretch at 447 to 816 folds into the USP domain; sequence DPLLKYSNVE…IPCVLAYQVQ (370 aa). The Exonuclease domain occupies 865-1043; the sequence is VALDTEFVDL…IEDARMALRL (179 aa). The a divalent metal cation site is built by aspartate 868, glutamate 870, aspartate 977, and aspartate 1036. The interval 1074-1150 is disordered; the sequence is PPPRNGVPTV…GDFFSGSPLK (77 aa). The segment covering 1091 to 1106 has biased composition (polar residues); that stretch reads VTMQNNSGRNTPSTSD. A compositionally biased stretch (low complexity) spans 1108–1120; the sequence is AGAAASAPATPRQ.

The protein belongs to the peptidase C19 family. PAN2 subfamily. Forms a heterotrimer with an asymmetric homodimer of the regulatory subunit pan3 to form the poly(A)-nuclease (PAN) deadenylation complex. The cofactor is a divalent metal cation.

The protein resides in the cytoplasm. It catalyses the reaction Exonucleolytic cleavage of poly(A) to 5'-AMP.. Positively regulated by the regulatory subunit pan3. Its function is as follows. Catalytic subunit of the poly(A)-nuclease (PAN) deadenylation complex, one of two cytoplasmic mRNA deadenylases involved in mRNA turnover. PAN specifically shortens poly(A) tails of RNA and the activity is stimulated by poly(A)-binding protein pab1. PAN deadenylation is followed by rapid degradation of the shortened mRNA tails by the CCR4-NOT complex. Deadenylated mRNAs are then degraded by two alternative mechanisms, namely exosome-mediated 3'-5' exonucleolytic degradation, or deadenylation-dependent mRNA decaping and subsequent 5'-3' exonucleolytic degradation by xrn1. May also be involved in post-transcriptional maturation of mRNA poly(A) tails. This Aspergillus niger (strain ATCC MYA-4892 / CBS 513.88 / FGSC A1513) protein is PAN2-PAN3 deadenylation complex catalytic subunit pan2.